The primary structure comprises 570 residues: Periplasmic trehalase (570 aa).

An N-terminal signal peptide occupies residues 1-34; the sequence is MIPPEIRRSVLLQKAIKLALAGTLLTFASFSATA. Substrate-binding positions include R159, 166-167, N203, 212-214, 284-286, and G317; these read WD, RSQ, and RPE. Catalysis depends on proton donor/acceptor residues D319 and E503. E518 is a binding site for substrate. The tract at residues 544 to 570 is disordered; sequence KPCDSVPSTRPASLSATPTKTPSAATQ. Positions 554–570 are enriched in low complexity; the sequence is PASLSATPTKTPSAATQ.

Belongs to the glycosyl hydrolase 37 family. Monomer.

The protein localises to the periplasm. The catalysed reaction is alpha,alpha-trehalose + H2O = alpha-D-glucose + beta-D-glucose. In terms of biological role, provides the cells with the ability to utilize trehalose at high osmolarity by splitting it into glucose molecules that can subsequently be taken up by the phosphotransferase-mediated uptake system. The chain is Periplasmic trehalase from Salmonella newport (strain SL254).